Reading from the N-terminus, the 249-residue chain is Mannose-binding protein A (249 aa).

Residues M1–S20 form the signal peptide. The disordered stretch occupies residues V41 to V102. The segment covering R48–E60 has biased composition (basic and acidic residues). The residue at position 54 (P54) is a 4-hydroxyproline. Residues K55 and K58 each carry the 5-hydroxylysine modification. 2 O-linked (Gal...) hydroxylysine glycosylation sites follow: K55 and K58. P61, P72, P78, and P89 each carry 4-hydroxyproline. Residues G64 to D98 enclose the Collagen-like domain. Residues K90 and K93 each carry the 5-hydroxylysine modification. 2 O-linked (Gal...) hydroxylysine glycosylation sites follow: K90 and K93. A C-type lectin domain is found at S135 to E246. 2 disulfide bridges follow: C156–C245 and C223–C237. Ca(2+) contacts are provided by D189, E193, E213, N215, D216, E221, D222, N233, and D234. The interval E213 to E221 is calcium-dependent carbohydrate binding.

Interacts with MASP1 and MASP2. Forms oligomeric complexes of 3, 4, 5 or, predominantly, 6 homotrimers. The homotrimers appear as globular heads that are connected to a central hub by thin stalks. Hydroxylated on lysine and proline residues within the collagen-like domain. In terms of processing, O-glycosylated. O-linked glycans on hydroxylysine residues consist of Glc-Gal disaccharides bound to the oxygen atom of post-translationally added hydroxyl groups. As to expression, detected in blood serum (at protein level). Expressed in liver. Weakly expressed in lung, testis and brain. Not detected in bone marrow and heart.

The protein localises to the secreted. Its function is as follows. Calcium-dependent lectin. Plays a role in the innate immune response by binding mannose, fucose and N-acetylglucosamine on bacteria, including strains of A.suis, H.parasuis and A.pleuropneumoniae, and activates the lectin complement pathway. According to some authors, it only binds mannose. The chain is Mannose-binding protein A from Sus scrofa (Pig).